We begin with the raw amino-acid sequence, 295 residues long: Bifunctional protein FolD (295 aa).

NADP(+) is bound by residues 167–169, serine 192, and isoleucine 233; that span reads GRS.

The protein belongs to the tetrahydrofolate dehydrogenase/cyclohydrolase family. As to quaternary structure, homodimer.

It carries out the reaction (6R)-5,10-methylene-5,6,7,8-tetrahydrofolate + NADP(+) = (6R)-5,10-methenyltetrahydrofolate + NADPH. The catalysed reaction is (6R)-5,10-methenyltetrahydrofolate + H2O = (6R)-10-formyltetrahydrofolate + H(+). Its pathway is one-carbon metabolism; tetrahydrofolate interconversion. Functionally, catalyzes the oxidation of 5,10-methylenetetrahydrofolate to 5,10-methenyltetrahydrofolate and then the hydrolysis of 5,10-methenyltetrahydrofolate to 10-formyltetrahydrofolate. The chain is Bifunctional protein FolD from Paramagnetospirillum magneticum (strain ATCC 700264 / AMB-1) (Magnetospirillum magneticum).